The chain runs to 146 residues: DNA utilization protein HofO (146 aa).

The chain crosses the membrane as a helical span at residues 20–37 (WAFWLLMLVTLIFLSSTH).

It is found in the cell inner membrane. Functionally, required for the use of extracellular DNA as a nutrient. The sequence is that of DNA utilization protein HofO (hofO) from Escherichia coli (strain K12).